The chain runs to 20 residues: Protein PR-L6 (20 aa).

The protein belongs to the BetVI family.

The protein is Protein PR-L6 of Lupinus luteus (European yellow lupine).